A 381-amino-acid polypeptide reads, in one-letter code: tRNA pseudouridine synthase D (381 aa).

D81 acts as the Nucleophile in catalysis. Positions 160–335 (GMPNYFGSQR…TLGSRRFFWV (176 aa)) constitute a TRUD domain.

This sequence belongs to the pseudouridine synthase TruD family.

It carries out the reaction uridine(13) in tRNA = pseudouridine(13) in tRNA. Its function is as follows. Responsible for synthesis of pseudouridine from uracil-13 in transfer RNAs. The chain is tRNA pseudouridine synthase D from Helicobacter pylori (strain G27).